The chain runs to 78 residues: Small ribosomal subunit protein uS17 (78 aa).

Belongs to the universal ribosomal protein uS17 family. In terms of assembly, part of the 30S ribosomal subunit.

Functionally, one of the primary rRNA binding proteins, it binds specifically to the 5'-end of 16S ribosomal RNA. In Parvibaculum lavamentivorans (strain DS-1 / DSM 13023 / NCIMB 13966), this protein is Small ribosomal subunit protein uS17.